The chain runs to 526 residues: Probable feruloyl esterase B-2 (526 aa).

The signal sequence occupies residues 1-18 (MTKLSLLPLLTLASAVLA). Cystine bridges form between C27–C74 and C62–C113. A glycan (N-linked (GlcNAc...) asparagine) is linked at N52. N-linked (GlcNAc...) asparagine glycosylation occurs at N137. Cystine bridges form between C186–C441, C255–C272, C281–C291, and C503–C525. Residue S187 is the Acyl-ester intermediate of the active site. N233 is a glycosylation site (N-linked (GlcNAc...) asparagine). Residues D256, D259, A261, D263, and I265 each coordinate Ca(2+). A glycan (N-linked (GlcNAc...) asparagine) is linked at N311. Residues D400 and H440 each act as charge relay system in the active site. N516 carries an N-linked (GlcNAc...) asparagine glycan.

It belongs to the tannase family.

The protein localises to the secreted. The catalysed reaction is feruloyl-polysaccharide + H2O = ferulate + polysaccharide.. Involved in degradation of plant cell walls. Hydrolyzes the feruloyl-arabinose ester bond in arabinoxylans as well as the feruloyl-galactose and feruloyl-arabinose ester bonds in pectin. This chain is Probable feruloyl esterase B-2 (faeB-2), found in Aspergillus fumigatus (strain CBS 144.89 / FGSC A1163 / CEA10) (Neosartorya fumigata).